A 341-amino-acid chain; its full sequence is HTH-type transcriptional repressor PurR (341 aa).

Residues 2–56 enclose the HTH lacI-type domain; the sequence is ATIKDVAKRANVSTTTVSHVINKTRFVAEETRNAVWAAIKELHYSPSAVARSLKV. A DNA-binding region (H-T-H motif) is located at residues 4-23; that stretch reads IKDVAKRANVSTTTVSHVIN. A DNA-binding region spans residues 48-56; the sequence is SAVARSLKV. Hypoxanthine is bound by residues Y73, R190, T192, F221, and D275.

Homodimer.

It functions in the pathway purine metabolism; purine nucleotide biosynthesis [regulation]. Functionally, is the main repressor of the genes involved in the de novo synthesis of purine nucleotides, regulating purB, purC, purEK, purF, purHD, purL, purMN and guaBA expression. PurR is allosterically activated to bind its cognate DNA by binding the purine corepressors, hypoxanthine or guanine, thereby effecting transcription repression. This chain is HTH-type transcriptional repressor PurR, found in Shigella dysenteriae serotype 1 (strain Sd197).